A 411-amino-acid polypeptide reads, in one-letter code: Glycerol-3-phosphate dehydrogenase [NAD(+)] (411 aa).

NAD(+) contacts are provided by residues 71-76, F103, and F159; that span reads GSGNWG. Position 182 (K182) interacts with substrate. An NAD(+)-binding site is contributed by A215. Catalysis depends on K275, which acts as the Proton acceptor. Residues R340 and Q369 each coordinate NAD(+). 340–341 contacts substrate; that stretch reads RN.

The protein belongs to the NAD-dependent glycerol-3-phosphate dehydrogenase family.

The enzyme catalyses sn-glycerol 3-phosphate + NAD(+) = dihydroxyacetone phosphate + NADH + H(+). This is Glycerol-3-phosphate dehydrogenase [NAD(+)] (GPD) from Lachancea thermotolerans (Yeast).